The chain runs to 23 residues: Basic phospholipase A2 homolog (23 aa).

Post-translationally, contains 7 disulfide bonds. As to expression, expressed by the venom gland.

Its subcellular location is the secreted. The sequence is that of Basic phospholipase A2 homolog from Trimeresurus stejnegeri (Chinese green tree viper).